Here is a 285-residue protein sequence, read N- to C-terminus: Putative sugar uptake protein lp_2503 (285 aa).

The next 9 membrane-spanning stretches (helical) occupy residues Gly-2 to Gly-21, Thr-31 to Val-48, Ser-55 to Gln-72, Gly-112 to Leu-134, Asn-147 to Val-169, Val-179 to Phe-196, Asn-209 to Ala-228, Ala-233 to Gly-255, and Val-264 to Met-283.

This sequence belongs to the GRP transporter (TC 2.A.7.5) family.

It localises to the cell membrane. The polypeptide is Putative sugar uptake protein lp_2503 (Lactiplantibacillus plantarum (strain ATCC BAA-793 / NCIMB 8826 / WCFS1) (Lactobacillus plantarum)).